The sequence spans 155 residues: Cytochrome c-type biogenesis protein CcmE (155 aa).

The Cytoplasmic portion of the chain corresponds to Met1–Arg8. Residues Leu9–Ala29 traverse the membrane as a helical; Signal-anchor for type II membrane protein segment. Topologically, residues Leu30–Gly155 are periplasmic. Heme-binding residues include His124 and Tyr128. Positions Thr134–Gly155 are disordered.

This sequence belongs to the CcmE/CycJ family.

Its subcellular location is the cell inner membrane. In terms of biological role, heme chaperone required for the biogenesis of c-type cytochromes. Transiently binds heme delivered by CcmC and transfers the heme to apo-cytochromes in a process facilitated by CcmF and CcmH. This is Cytochrome c-type biogenesis protein CcmE from Pseudomonas savastanoi pv. phaseolicola (strain 1448A / Race 6) (Pseudomonas syringae pv. phaseolicola (strain 1448A / Race 6)).